Reading from the N-terminus, the 203-residue chain is Venom allergen 5 (203 aa).

Disulfide bonds link C4–C15, C7–C100, C25–C93, and C169–C186. An SCP domain is found at 45–188 (KRHNEFRQKV…WHTHYLVCNY (144 aa)).

The protein belongs to the CRISP family. Venom allergen 5-like subfamily. As to expression, expressed by the venom gland.

It is found in the secreted. In Dolichovespula arenaria (Yellow hornet), this protein is Venom allergen 5.